Consider the following 546-residue polypeptide: Chaperonin GroEL 1 (546 aa).

ATP contacts are provided by residues 30-33 (TLGP), lysine 51, 87-91 (DGTTT), glycine 415, and aspartate 495. Residues 527–546 (DAAPTAAPGGPGAGGPGFDF) are disordered. The segment covering 535-546 (GGPGAGGPGFDF) has biased composition (gly residues).

The protein belongs to the chaperonin (HSP60) family. Forms a cylinder of 14 subunits composed of two heptameric rings stacked back-to-back. Interacts with the co-chaperonin GroES.

It localises to the cytoplasm. It carries out the reaction ATP + H2O + a folded polypeptide = ADP + phosphate + an unfolded polypeptide.. In terms of biological role, together with its co-chaperonin GroES, plays an essential role in assisting protein folding. The GroEL-GroES system forms a nano-cage that allows encapsulation of the non-native substrate proteins and provides a physical environment optimized to promote and accelerate protein folding. This chain is Chaperonin GroEL 1, found in Burkholderia lata (strain ATCC 17760 / DSM 23089 / LMG 22485 / NCIMB 9086 / R18194 / 383).